A 62-amino-acid chain; its full sequence is Prokaryotic ubiquitin-like protein Pup (62 aa).

Residues 1 to 29 (MSQQSLNAPGPGAEDGNDPEAVTGGQTFA) form a disordered region. An ARC ATPase binding region spans residues 21 to 56 (AVTGGQTFASAQAADDLLDEIDSVLESNAETFVRSF). Gln62 bears the Deamidated glutamine mark. Gln62 participates in a covalent cross-link: Isoglutamyl lysine isopeptide (Gln-Lys) (interchain with K-? in acceptor proteins).

It belongs to the prokaryotic ubiquitin-like protein family. In terms of assembly, strongly interacts with the proteasome-associated ATPase ARC through a hydrophobic interface; the interacting region of Pup lies in its C-terminal half. There is one Pup binding site per ARC hexamer ring. Post-translationally, is modified by deamidation of its C-terminal glutamine to glutamate by the deamidase Dop, a prerequisite to the subsequent pupylation process.

The protein operates within protein degradation; proteasomal Pup-dependent pathway. Functionally, protein modifier that is covalently attached to lysine residues of substrate proteins, thereby targeting them for proteasomal degradation. The tagging system is termed pupylation. The sequence is that of Prokaryotic ubiquitin-like protein Pup from Brachybacterium faecium (strain ATCC 43885 / DSM 4810 / JCM 11609 / LMG 19847 / NBRC 14762 / NCIMB 9860 / 6-10).